The primary structure comprises 493 residues: MRLIGLALGLLLGALAQAGEAPGEALYRQHCQACHGAGRLGGSGPTLLPESLSRLKPAQAREVILHGRPATQMAGFAGQLDDAAADALVAYLYQAPPREPQWSAEDIRASQVQPHPLATLPSRPRFEADPLNLFVVVESGDHHVTILDGDRFEPIARFPSRYALHGGPKFSPDGRLVYFASRDGWVTLYDLYNLKVVAEVRAGLNTRNLAVSDDGRWVLVGNYLPGNLVLLDARDLSLVQVIPAADAQGQASRVSAVYTAPPRHSFVVALKDVHELWELPYANGKPVAPKRLAVADYLDDFSFSPDYRYLLGSSRQARGGEVIELDSGARVASIPLSGMPHLGSGIYWKRDGRWVFATPNISRGVISVIDLQNWKPLKEIVTDGPGFFMRSHADSPYAWTDTFLGKKHDEILLIDKQTLEIAHRLRPSPGKVAGHVEFTRDGRYALLSVWDRDGALVVYDAHSLEEVKRLPMNKPSGKYNVGNKIGYAEGTSH.

The signal sequence occupies residues 1 to 18 (MRLIGLALGLLLGALAQA). One can recognise a Cytochrome c domain in the interval 19–96 (GEAPGEALYR…ALVAYLYQAP (78 aa)). The heme c site is built by Cys31, Cys34, His35, Arg68, and Met73. The tract at residues 114-468 (PHPLATLPSR…YDAHSLEEVK (355 aa)) is D1-heme domain. Heme d1-binding residues include His165, Gly167, Lys169, Arg182, Arg207, Asn208, His341, Arg390, and His435. Residue Arg182 coordinates heme c.

The protein belongs to the cytochrome c family. Monomer. The cofactor is heme c.

The protein resides in the periplasm. The catalysed reaction is dihydro-heme d1 + A = heme d1 + AH2. It participates in porphyrin-containing compound metabolism. Functionally, involved in heme d1 biosynthesis. Catalyzes the introduction of a double bond into the propionate side chain of pyrrole ring D of dihydro-heme d1, therefore converting dihydro-heme d1 to heme d1. The polypeptide is Dihydro-heme d1 dehydrogenase (Pseudomonas aeruginosa (strain ATCC 15692 / DSM 22644 / CIP 104116 / JCM 14847 / LMG 12228 / 1C / PRS 101 / PAO1)).